A 799-amino-acid chain; its full sequence is Protein scabrous (799 aa).

The signal sequence occupies residues 1-51 (MRDWQTFPDLQKKKVSRDHLNCPATMAGSNVLWPILLAVVLLQISVAFVSG). The segment at 287–316 (TRKDGSSASVEEESGSQEANQEQTGLETTA) is disordered. Asn-372 carries an N-linked (GlcNAc...) asparagine glycan. Positions 489-498 (LNKPHKRPHH) are enriched in basic residues. The tract at residues 489–509 (LNKPHKRPHHQNVQAQMPQDD) is disordered. One can recognise a Fibrinogen C-terminal domain in the interval 533 to 737 (AIINKLPHDC…SSRMLVKRLP (205 aa)). Cysteines 542 and 568 form a disulfide. N-linked (GlcNAc...) asparagine glycosylation is found at Asn-587, Asn-618, and Asn-660. Residues Cys-687 and Cys-700 are joined by a disulfide bond. N-linked (GlcNAc...) asparagine glycosylation is found at Asn-744 and Asn-787.

Possesses five pairs of dibasic residues that may be the target of proteolytic processing.

The protein localises to the late endosome. Involved in regulation of neurogenesis. May encode a lateral inhibitor of R8 differentiation. In conjunction with Gp150, promotes Notch activation in response to Delta by regulating acquisition of insensitivity to Delta in a subset of cells. The chain is Protein scabrous (sca) from Drosophila melanogaster (Fruit fly).